Consider the following 886-residue polypeptide: Valine--tRNA ligase (886 aa).

Residues 53 to 63 carry the 'HIGH' region motif; that stretch reads PNVTGSLHMGH. The 'KMSKS' region motif lies at 540–544; sequence KMSKS. Residue Lys-543 coordinates ATP. A coiled-coil region spans residues 820-851; sequence IDVAAERRRMEKDLAAAQKELASTAAKLANAD.

It belongs to the class-I aminoacyl-tRNA synthetase family. ValS type 1 subfamily. As to quaternary structure, monomer.

Its subcellular location is the cytoplasm. It catalyses the reaction tRNA(Val) + L-valine + ATP = L-valyl-tRNA(Val) + AMP + diphosphate. Catalyzes the attachment of valine to tRNA(Val). As ValRS can inadvertently accommodate and process structurally similar amino acids such as threonine, to avoid such errors, it has a 'posttransfer' editing activity that hydrolyzes mischarged Thr-tRNA(Val) in a tRNA-dependent manner. The chain is Valine--tRNA ligase from Mycobacterium leprae (strain TN).